The chain runs to 489 residues: Lysine-specific permease LysP (489 aa).

Over 2-22 the chain is Cytoplasmic; that stretch reads VSETKTTEAPGLRRELKARHL. Residues 23–43 traverse the membrane as a helical segment; that stretch reads TMIAIGGSIGTGLFVASGATI. At 44-45 the chain is on the periplasmic side; it reads SQ. Residues 46–66 traverse the membrane as a helical segment; the sequence is AGPGGALLSYMLIGLMVYFLM. At 67-105 the chain is on the cytoplasmic side; that stretch reads TSLGELAAYMPVSGSFATYGQNYVEEGFGFALGWNYWYN. Residues 106-126 traverse the membrane as a helical segment; it reads WAVTIAVDLVAAQLVMSWWFP. Residues 127 to 128 are Periplasmic-facing; the sequence is DT. The chain crosses the membrane as a helical span at residues 129–149; sequence PGWIWSALFLGVIFLLNYISV. Residues 150–161 lie on the Cytoplasmic side of the membrane; it reads RGFGEAEYWFSL. Residues 162–182 form a helical membrane-spanning segment; it reads IKVTTVIVFIIVGVLMIIGIF. Residues 183-197 are Periplasmic-facing; it reads KGAQPAGWSNWTIGE. A helical transmembrane segment spans residues 198 to 218; sequence APFAGGFAAMIGVAMIVGFSF. The Cytoplasmic segment spans residues 219–244; it reads QGTELIGIAAGESEDPAKNIPRAVRQ. Residues 245-265 traverse the membrane as a helical segment; the sequence is VFWRILLFYVFAILIISLIIP. The Periplasmic segment spans residues 266–290; the sequence is YTDPSLLRNDVKDISVSPFTLVFQH. Residues 291-311 form a helical membrane-spanning segment; sequence AGLLSAAAVMNAVILTAVLSA. Residues 312–346 are Cytoplasmic-facing; sequence GNSGMYASTRMLYTLACDGKAPRIFAKLSRGGVPR. The chain crosses the membrane as a helical span at residues 347–367; it reads NALYATTVIAGLCFLTSMFGN. Residues 368-370 lie on the Periplasmic side of the membrane; that stretch reads QTV. A helical membrane pass occupies residues 371-391; it reads YLWLLNTSGMTGFIAWLGIAI. The Cytoplasmic segment spans residues 392-413; sequence SHYRFRRGYVLQGHDINDLPYR. A helical transmembrane segment spans residues 414–434; it reads SGFFPLGPIFAFILCLIITLG. The Periplasmic portion of the chain corresponds to 435–446; the sequence is QNYEAFLKDTID. The helical transmembrane segment at 447–467 threads the bilayer; it reads WGGVAATYIGIPLFLIIWFGY. Over 468–489 the chain is Cytoplasmic; that stretch reads KLIKGTHFVRYSEMKFPQNDKK.

It belongs to the amino acid-polyamine-organocation (APC) superfamily. Amino acid transporter (AAT) (TC 2.A.3.1) family. Interacts strongly with the transcriptional activator CadC in the absence of lysine or at low lysine concentrations. Interaction is markedly attenuated under increasing lysine levels. Concomitant pH-dependent protonation of periplasmic amino acids in both proteins dissolves their electrostatic connections resulting in further destabilization of the CadC/LysP interaction. Low pH promotes oligomerization of LysP.

It localises to the cell inner membrane. The enzyme catalyses L-lysine(out) + H(+)(out) = L-lysine(in) + H(+)(in). Its function is as follows. Permease involved in lysine uptake. In addition, functions as a lysine sensor that mediates the lysine-dependent regulation of the transcriptional activator CadC. In the absence of lysine, or at low lysine concentrations, LysP inhibits CadC by an interaction with the transmembrane domain of CadC. In the presence of lysine, LysP loses its ability to interact with and inhibit CadC, and acts as a lysine permease. The protein is Lysine-specific permease LysP of Escherichia coli (strain K12).